Consider the following 104-residue polypeptide: AVIToxin-VAR2 (104 aa).

Positions 1-19 are cleaved as a signal peptide; sequence MRSLLCAPLLLLLLSAGES. Cystine bridges form between Cys26–Cys38, Cys32–Cys50, Cys37–Cys78, Cys60–Cys86, and Cys80–Cys96.

This sequence belongs to the AVIT (prokineticin) family. In terms of tissue distribution, expressed by the venom gland.

Its subcellular location is the secreted. In terms of biological role, potent agonist for both PKR1/PROKR1 and PKR2/PROKR2. Potently contracts gastrointestinal (GI) smooth muscle. This chain is AVIToxin-VAR2, found in Varanus varius (Lace monitor lizard).